The sequence spans 94 residues: Co-chaperonin GroES (94 aa).

The protein belongs to the GroES chaperonin family. Heptamer of 7 subunits arranged in a ring. Interacts with the chaperonin GroEL.

The protein resides in the cytoplasm. Its function is as follows. Together with the chaperonin GroEL, plays an essential role in assisting protein folding. The GroEL-GroES system forms a nano-cage that allows encapsulation of the non-native substrate proteins and provides a physical environment optimized to promote and accelerate protein folding. GroES binds to the apical surface of the GroEL ring, thereby capping the opening of the GroEL channel. In Clostridium beijerinckii (strain ATCC 51743 / NCIMB 8052) (Clostridium acetobutylicum), this protein is Co-chaperonin GroES.